Here is a 271-residue protein sequence, read N- to C-terminus: Phosphonates import ATP-binding protein PhnC 2 (271 aa).

In terms of domain architecture, ABC transporter spans Leu2 to Ala245. Gly34–Ser41 is a binding site for ATP.

Belongs to the ABC transporter superfamily. Phosphonates importer (TC 3.A.1.9.1) family. The complex is composed of two ATP-binding proteins (PhnC), two transmembrane proteins (PhnE) and a solute-binding protein (PhnD).

Its subcellular location is the cell inner membrane. It catalyses the reaction phosphonate(out) + ATP + H2O = phosphonate(in) + ADP + phosphate + H(+). Functionally, part of the ABC transporter complex PhnCDE involved in phosphonates import. Responsible for energy coupling to the transport system. The polypeptide is Phosphonates import ATP-binding protein PhnC 2 (Roseobacter denitrificans (strain ATCC 33942 / OCh 114) (Erythrobacter sp. (strain OCh 114))).